Reading from the N-terminus, the 311-residue chain is 4-hydroxyproline 2-epimerase (311 aa).

Cys88 acts as the Proton acceptor in catalysis. Substrate contacts are provided by residues Gly89–His90, His208, and Asp232. The active-site Proton donor is the Cys236. Substrate is bound at residue Gly237–Thr238.

It belongs to the proline racemase family.

It catalyses the reaction trans-4-hydroxy-L-proline = cis-4-hydroxy-D-proline. Catalyzes the epimerization of trans-4-hydroxy-L-proline (t4LHyp) to cis-4-hydroxy-D-proline (c4DHyp). Is likely involved in a degradation pathway that converts t4LHyp to alpha-ketoglutarate. Displays no proline racemase activity. The chain is 4-hydroxyproline 2-epimerase from Chromohalobacter salexigens (strain ATCC BAA-138 / DSM 3043 / CIP 106854 / NCIMB 13768 / 1H11).